The primary structure comprises 155 residues: SsrA-binding protein (155 aa).

The protein belongs to the SmpB family.

The protein localises to the cytoplasm. Its function is as follows. Required for rescue of stalled ribosomes mediated by trans-translation. Binds to transfer-messenger RNA (tmRNA), required for stable association of tmRNA with ribosomes. tmRNA and SmpB together mimic tRNA shape, replacing the anticodon stem-loop with SmpB. tmRNA is encoded by the ssrA gene; the 2 termini fold to resemble tRNA(Ala) and it encodes a 'tag peptide', a short internal open reading frame. During trans-translation Ala-aminoacylated tmRNA acts like a tRNA, entering the A-site of stalled ribosomes, displacing the stalled mRNA. The ribosome then switches to translate the ORF on the tmRNA; the nascent peptide is terminated with the 'tag peptide' encoded by the tmRNA and targeted for degradation. The ribosome is freed to recommence translation, which seems to be the essential function of trans-translation. The sequence is that of SsrA-binding protein from Geobacillus thermodenitrificans (strain NG80-2).